A 156-amino-acid polypeptide reads, in one-letter code: Transcription antitermination protein NusB (156 aa).

It belongs to the NusB family.

Involved in transcription antitermination. Required for transcription of ribosomal RNA (rRNA) genes. Binds specifically to the boxA antiterminator sequence of the ribosomal RNA (rrn) operons. In Syntrophotalea carbinolica (strain DSM 2380 / NBRC 103641 / GraBd1) (Pelobacter carbinolicus), this protein is Transcription antitermination protein NusB.